We begin with the raw amino-acid sequence, 409 residues long: Putative lipoate-protein ligase A (409 aa).

One can recognise a BPL/LPL catalytic domain in the interval 146–330 (GPDNCRLVFY…RFQKTFKVDG (185 aa)). Residues Arg188, 193-196 (GTVL), and Lys249 contribute to the ATP site. Lys249 is a (R)-lipoate binding site.

Belongs to the LplA family. In terms of assembly, monomer.

It catalyses the reaction L-lysyl-[lipoyl-carrier protein] + (R)-lipoate + ATP = N(6)-[(R)-lipoyl]-L-lysyl-[lipoyl-carrier protein] + AMP + diphosphate + H(+). Its pathway is protein modification; protein lipoylation via exogenous pathway; protein N(6)-(lipoyl)lysine from lipoate: step 1/2. The protein operates within protein modification; protein lipoylation via exogenous pathway; protein N(6)-(lipoyl)lysine from lipoate: step 2/2. Functionally, catalyzes both the ATP-dependent activation of exogenously supplied lipoate to lipoyl-AMP and the transfer of the activated lipoyl onto the lipoyl domains of lipoate-dependent enzymes. This chain is Putative lipoate-protein ligase A (AIM22), found in Saccharomyces cerevisiae (strain YJM789) (Baker's yeast).